The chain runs to 859 residues: Envelope glycoprotein gp160 (859 aa).

Positions 1-23 (MAYFSSRLPIALLLIGISGFVCK) are cleaved as a signal peptide. The Extracellular portion of the chain corresponds to 24-678 (QYVTVFYGIP…WFDLTSWIKY (655 aa)). Asn-37 is a glycosylation site (N-linked (GlcNAc...) asparagine; by host). Cys-44 and Cys-57 are joined by a disulfide. Residues Asn-70, Asn-112, Asn-122, Asn-142, Asn-150, Asn-165, Asn-191, Asn-206, Asn-238, Asn-241, Asn-248, Asn-272, Asn-278, Asn-289, Asn-300, Asn-310, Asn-343, Asn-367, Asn-400, Asn-410, Asn-413, Asn-450, Asn-464, and Asn-468 are each glycosylated (N-linked (GlcNAc...) asparagine; by host). Cystine bridges form between Cys-101/Cys-214, Cys-108/Cys-205, Cys-113/Cys-164, Cys-227/Cys-257, and Cys-237/Cys-249. The segment at 113-163 (CSKTETNPGNASSTTTTKPTTTSRGLKTINETDPCIKNDSCTGLGEEEIMQ) is V1. Positions 164–205 (CNFSMTGLRRDELKQYKDTWYSEDLECNNTRKYTSRCYIRTC) are V2. Residues 305–337 (CKRPGNKTVVPIRTVSGLLFHSQPINKRPRQAW) form a V3 region. An intrachain disulfide couples Cys-305 to Cys-338. 2 disulfide bridges follow: Cys-392–Cys-449 and Cys-399–Cys-422. The V4 stretch occupies residues 399–422 (CNMTWFLNWVENKTNTTRRNYAPC). Residues 465-471 (STTNISV) are V5. The tract at residues 514–534 (GVMVLGFLGFLAMAGSAMGAT) is fusion peptide. The tract at residues 577–593 (LQARVTAIEKYLKDQAQ) is immunosuppression. N-linked (GlcNAc...) asparagine; by host glycosylation is found at Asn-613, Asn-622, and Asn-638. Residues 626–647 (QQWEKQVHFLDANITALLEEAQ) adopt a coiled-coil conformation. The tract at residues 659-680 (KINSWDVFGNWFDLTSWIKYIH) is MPER; binding to GalCer. The chain crosses the membrane as a helical span at residues 679–699 (IHLGLYIVAGLVVLRIVVYIV). At 700 to 859 (QMLARLRKGY…IRQGLELTLL (160 aa)) the chain is on the cytoplasmic side. A YXXV motif; contains endocytosis signal motif is present at residues 709–712 (YRPV). The disordered stretch occupies residues 715 to 744 (SPPSYTQQIPIRKDRGQPANEETEEGGGND). A lipid anchor (S-palmitoyl cysteine; by host) is attached at Cys-775. A Di-leucine internalization motif motif is present at residues 858-859 (LL).

In terms of assembly, the mature envelope protein (Env) consists of a homotrimer of non-covalently associated gp120-gp41 heterodimers. The resulting complex protrudes from the virus surface as a spike. There seems to be as few as 10 spikes on the average virion. Interacts with human CD4, CCR5 and CXCR4, to form a P4HB/PDI-CD4-CXCR4-gp120 complex. Gp120 also interacts with the C-type lectins CD209/DC-SIGN and CLEC4M/DC-SIGNR (collectively referred to as DC-SIGN(R)). Gp120 and gp41 interact with GalCer. The mature envelope protein (Env) consists of a homotrimer of non-covalently associated gp120-gp41 heterodimers. The resulting complex protrudes from the virus surface as a spike. There seems to be as few as 10 spikes on the average virion. Post-translationally, specific enzymatic cleavages in vivo yield mature proteins. Envelope glycoproteins are synthesized as an inactive precursor that is heavily N-glycosylated and processed likely by host cell furin in the Golgi to yield the mature SU and TM proteins. The cleavage site between SU and TM requires the minimal sequence [KR]-X-[KR]-R. In terms of processing, palmitoylation of the transmembrane protein and of Env polyprotein (prior to its proteolytic cleavage) is essential for their association with host cell membrane lipid rafts. Palmitoylation is therefore required for envelope trafficking to classical lipid rafts, but not for viral replication.

It localises to the virion membrane. It is found in the host cell membrane. Its subcellular location is the host endosome membrane. In terms of biological role, the surface protein gp120 (SU) attaches the virus to the host lymphoid cell by binding to the primary receptor CD4. This interaction induces a structural rearrangement creating a high affinity binding site for a chemokine coreceptor like CXCR4 and/or CCR5. This peculiar 2 stage receptor-interaction strategy allows gp120 to maintain the highly conserved coreceptor-binding site in a cryptic conformation, protected from neutralizing antibodies. Since CD4 also displays a binding site for the disulfide-isomerase P4HB/PDI, a P4HB/PDI-CD4-CXCR4-gp120 complex may form. In that complex, P4HB/PDI could reach and reduce gp120 disulfide bonds, causing major conformational changes in gp120. TXN, another PDI family member could also be involved in disulfide rearrangements in Env during fusion. These changes are transmitted to the transmembrane protein gp41 and are thought to activate its fusogenic potential by unmasking its fusion peptide. The surface protein gp120 is a ligand for CD209/DC-SIGN and CLEC4M/DC-SIGNR, which are respectively found on dendritic cells (DCs), and on endothelial cells of liver sinusoids and lymph node sinuses. These interactions allow capture of viral particles at mucosal surfaces by these cells and subsequent transmission to permissive cells. DCs are professional antigen presenting cells, critical for host immunity by inducing specific immune responses against a broad variety of pathogens. They act as sentinels in various tissues where they take up antigen, process it, and present it to T-cells following migration to lymphoid organs. HIV subverts the migration properties of dendritic cells to gain access to CD4+ T-cells in lymph nodes. Virus transmission to permissive T-cells occurs either in trans (without DCs infection, through viral capture and transmission), or in cis (following DCs productive infection, through the usual CD4-gp120 interaction), thereby inducing a robust infection. In trans infection, bound virions remain infectious over days and it is proposed that they are not degraded, but protected in non-lysosomal acidic organelles within the DCs close to the cell membrane thus contributing to the viral infectious potential during DCs' migration from the periphery to the lymphoid tissues. On arrival at lymphoid tissues, intact virions recycle back to DCs' cell surface allowing virus transmission to CD4+ T-cells. Virion capture also seems to lead to MHC-II-restricted viral antigen presentation, and probably to the activation of HIV-specific CD4+ cells. Its function is as follows. The transmembrane protein gp41 (TM) acts as a class I viral fusion protein. Under the current model, the protein has at least 3 conformational states: pre-fusion native state, pre-hairpin intermediate state, and post-fusion hairpin state. During fusion of viral and target intracellular membranes, the coiled coil regions (heptad repeats) assume a trimer-of-hairpins structure, positioning the fusion peptide in close proximity to the C-terminal region of the ectodomain. The formation of this structure appears to drive apposition and subsequent fusion of viral and target cell membranes. Complete fusion occurs in host cell endosomes and is dynamin-dependent, however some lipid transfer might occur at the plasma membrane. The virus undergoes clathrin-dependent internalization long before endosomal fusion, thus minimizing the surface exposure of conserved viral epitopes during fusion and reducing the efficacy of inhibitors targeting these epitopes. Membranes fusion leads to delivery of the nucleocapsid into the cytoplasm. Functionally, the envelope glycoprotein gp160 precursor down-modulates cell surface CD4 antigen by interacting with it in the endoplasmic reticulum and blocking its transport to the cell surface. In terms of biological role, the gp120-gp41 heterodimer seems to contribute to T-cell depletion during HIV-1 infection. The envelope glycoproteins expressed on the surface of infected cells induce apoptosis through an interaction with uninfected cells expressing the receptor (CD4) and the coreceptors CXCR4 or CCR5. This type of bystander killing may be obtained by at least three distinct mechanisms. First, the interaction between the 2 cells can induce cellular fusion followed by nuclear fusion within the syncytium. Syncytia are condemned to die from apoptosis. Second, the 2 interacting cells may not fuse entirely and simply exchange plasma membrane lipids, after a sort of hemifusion process, followed by rapid death. Third, it is possible that virus-infected cells, on the point of undergoing apoptosis, fuse with CD4-expressing cells, in which case apoptosis is rapidly transmitted from one cell to the other and thus occurs in a sort of contagious fashion. The gp120-gp41 heterodimer allows rapid transcytosis of the virus through CD4 negative cells such as simple epithelial monolayers of the intestinal, rectal and endocervical epithelial barriers. Both gp120 and gp41 specifically recognize glycosphingolipids galactosyl-ceramide (GalCer) or 3' sulfo-galactosyl-ceramide (GalS) present in the lipid rafts structures of epithelial cells. Binding to these alternative receptors allows the rapid transcytosis of the virus through the epithelial cells. This transcytotic vesicle-mediated transport of virions from the apical side to the basolateral side of the epithelial cells does not involve infection of the cells themselves. In Human immunodeficiency virus type 2 subtype B (isolate D205) (HIV-2), this protein is Envelope glycoprotein gp160 (env).